A 403-amino-acid polypeptide reads, in one-letter code: uncharacterized protein (403 aa).

12 consecutive transmembrane segments (helical) span residues 25-47 (IAFF…ILFL), 62-81 (SLSA…GPLS), 88-110 (VVMS…MNSW), 114-136 (IFMR…TYLS), 143-165 (VLSF…GRFL), 175-197 (WNIA…VYLL), 229-251 (LFFM…GYRL), 256-278 (FFLG…YSSP), 290-307 (GVIL…VLIT), 311-330 (IVLL…FAAH), 350-372 (SIYL…IFWI), and 376-398 (WLGI…IRLL).

It belongs to the major facilitator superfamily.

It is found in the cell membrane. This is an uncharacterized protein from Buchnera aphidicola subsp. Baizongia pistaciae (strain Bp).